The following is a 371-amino-acid chain: uncharacterized protein (371 aa).

Positions 43–148 (DESRVPKFYL…VQAFPTASNP (106 aa)) constitute an EH domain. A disordered region spans residues 179–205 (SMRKKKESDSKEVSAHNSPAKGAAHDL).

This is an uncharacterized protein from Caenorhabditis elegans.